The chain runs to 335 residues: Nucleoid-associated protein YejK (335 aa).

The protein belongs to the YejK family.

It is found in the cytoplasm. Its subcellular location is the nucleoid. The protein is Nucleoid-associated protein YejK of Shigella flexneri.